The following is a 433-amino-acid chain: MAIIPLAQLNELTISSSSSSFLTKSISSHSLHSSCICASSRISQFRGGFSKRRSDSTRSKSMRLRCSFSPMESARIKVIGVGGGGNNAVNRMISSGLQSVDFYAINTDSQALLQSSAENPLQIGELLTRGLGTGGNPLLGEQAAEESKDAIANALKGSDLVFITAGMGGGTGSGAAPVVAQISKDAGYLTVGVVTYPFSFEGRKRSLQALEAIEKLQKNVDTLIVIPNDRLLDIADEQTPLQDAFLLADDVLRQGVQGISDIITIPGLVNVDFADVKAVMKDSGTAMLGVGVSSSKNRAEEAAEQATLAPLIGSSIQSATGVVYNITGGKDITLQEVNRVSQVVTSLADPSANIIFGAVVDDRYTGEIHVTIIATGFSQSFQKTLLTDPRAAKLLDKMGSSGQQENKGMSLPHQKQSPSTISTKSSSPRRLFF.

Residues 1–66 constitute a chloroplast transit peptide; it reads MAIIPLAQLN…TRSKSMRLRC (66 aa). The residue at position 67 (serine 67) is an N-acetylserine. GTP-binding positions include 83–87, 170–172, glutamate 201, arginine 205, and aspartate 249; these read GGGNN and GTG. The disordered stretch occupies residues 399 to 433; sequence GSSGQQENKGMSLPHQKQSPSTISTKSSSPRRLFF. Low complexity predominate over residues 414-433; sequence QKQSPSTISTKSSSPRRLFF.

This sequence belongs to the FtsZ family. Aggregates to form a contractile ring-like structure; contraction of the ring was accompanied by an increase in the filament turnover rate. This aggregation is regulated in midchloroplast stroma by MIND1 (repressor) and MINE1 (promoter). Self-interacts and binds to FTSZ2-1 in heteromers to form two morphologically distinct types of filaments, termed type-I (smooth filaments) and type-II (rough filaments), in a GTP-dependent manner. Interacts with ARC3. Part of a complex made of ARC3, ARC6, FTSZ1 and FTSZ2. In terms of tissue distribution, in pollen grain, restricted to plastids of vegetative cells. Also present in pollen tubes plastids.

The protein resides in the plastid. It localises to the chloroplast stroma. The protein localises to the chloroplast thylakoid membrane. Exhibits GTPase activity. Component of the plastid division machinery that forms a contractile ring at the division site. Required for plastid division in a dose-dependent manner. Involved in epidermal plastids division in a MINE1-dependent manner. Involved in blue light-induced chloroplast movements. May regulate thylakoid development. In the vegetative shoot apex, at the shoot apical meristem (SAM), where the proplastid-to-chloroplast transition takes place, contributes equally with FTSZ2-1 in the L2 layer to plastid division. The polypeptide is Cell division protein FtsZ homolog 1, chloroplastic (Arabidopsis thaliana (Mouse-ear cress)).